A 244-amino-acid polypeptide reads, in one-letter code: UPF0280 protein Mhun_0136 (244 aa).

The protein belongs to the UPF0280 family.

The protein is UPF0280 protein Mhun_0136 of Methanospirillum hungatei JF-1 (strain ATCC 27890 / DSM 864 / NBRC 100397 / JF-1).